We begin with the raw amino-acid sequence, 71 residues long: Exodeoxyribonuclease 7 small subunit (71 aa).

Belongs to the XseB family. In terms of assembly, heterooligomer composed of large and small subunits.

Its subcellular location is the cytoplasm. The enzyme catalyses Exonucleolytic cleavage in either 5'- to 3'- or 3'- to 5'-direction to yield nucleoside 5'-phosphates.. Functionally, bidirectionally degrades single-stranded DNA into large acid-insoluble oligonucleotides, which are then degraded further into small acid-soluble oligonucleotides. This is Exodeoxyribonuclease 7 small subunit from Endomicrobium trichonymphae.